The primary structure comprises 163 residues: ATP synthase subunit b 1 (163 aa).

A helical membrane pass occupies residues 7–27 (AETWVAIAFVILLGVFAYLGV).

Belongs to the ATPase B chain family. As to quaternary structure, F-type ATPases have 2 components, F(1) - the catalytic core - and F(0) - the membrane proton channel. F(1) has five subunits: alpha(3), beta(3), gamma(1), delta(1), epsilon(1). F(0) has three main subunits: a(1), b(2) and c(10-14). The alpha and beta chains form an alternating ring which encloses part of the gamma chain. F(1) is attached to F(0) by a central stalk formed by the gamma and epsilon chains, while a peripheral stalk is formed by the delta and b chains.

The protein localises to the cell inner membrane. Functionally, f(1)F(0) ATP synthase produces ATP from ADP in the presence of a proton or sodium gradient. F-type ATPases consist of two structural domains, F(1) containing the extramembraneous catalytic core and F(0) containing the membrane proton channel, linked together by a central stalk and a peripheral stalk. During catalysis, ATP synthesis in the catalytic domain of F(1) is coupled via a rotary mechanism of the central stalk subunits to proton translocation. Component of the F(0) channel, it forms part of the peripheral stalk, linking F(1) to F(0). The polypeptide is ATP synthase subunit b 1 (Rhodopseudomonas palustris (strain ATCC BAA-98 / CGA009)).